Here is a 107-residue protein sequence, read N- to C-terminus: U1-lycotoxin-Ls1q (107 aa).

Residues 1–20 (MMKVLVVVALLVTLISYSSS) form the signal peptide. Positions 21–41 (EGIDDLEADELLSLMANEQTR) are excised as a propeptide. Intrachain disulfides connect Cys-44-Cys-59, Cys-51-Cys-68, Cys-58-Cys-86, and Cys-70-Cys-84.

It belongs to the neurotoxin 19 (CSTX) family. 04 (U1-Lctx) subfamily. Expressed by the venom gland.

It is found in the secreted. This chain is U1-lycotoxin-Ls1q, found in Lycosa singoriensis (Wolf spider).